The following is a 288-amino-acid chain: Shikimate dehydrogenase (NADP(+)) (288 aa).

Residues 14–16 (SIS) and Thr63 each bind shikimate. The Proton acceptor role is filled by Lys67. Glu79 serves as a coordination point for NADP(+). Asn88 and Asp103 together coordinate shikimate. NADP(+) is bound by residues 127 to 131 (GSGGA), 151 to 156 (NRTYEK), and Met219. Residue Tyr221 participates in shikimate binding. Gly242 contacts NADP(+).

Belongs to the shikimate dehydrogenase family. In terms of assembly, homodimer.

It catalyses the reaction shikimate + NADP(+) = 3-dehydroshikimate + NADPH + H(+). It functions in the pathway metabolic intermediate biosynthesis; chorismate biosynthesis; chorismate from D-erythrose 4-phosphate and phosphoenolpyruvate: step 4/7. Functionally, involved in the biosynthesis of the chorismate, which leads to the biosynthesis of aromatic amino acids. Catalyzes the reversible NADPH linked reduction of 3-dehydroshikimate (DHSA) to yield shikimate (SA). The chain is Shikimate dehydrogenase (NADP(+)) from Caldicellulosiruptor bescii (strain ATCC BAA-1888 / DSM 6725 / KCTC 15123 / Z-1320) (Anaerocellum thermophilum).